The sequence spans 1374 residues: Tripeptidyl-peptidase 2 (1374 aa).

Residues 62–558 (ALLLNKTDTE…QGMIKIATAY (497 aa)) form the Peptidase S8 domain. Catalysis depends on charge relay system residues Asp93, His314, and Ser499.

The protein belongs to the peptidase S8 family. In terms of tissue distribution, expressed in intestinal fat-storing cells and some head neurons.

It carries out the reaction Release of an N-terminal tripeptide from a polypeptide.. Component of the proteolytic cascade acting downstream of the 26S proteasome in the ubiquitin-proteasome pathway. Has a role in regulation of fat storage. This Caenorhabditis elegans protein is Tripeptidyl-peptidase 2 (tpp-2).